A 219-amino-acid polypeptide reads, in one-letter code: Pyridoxal 5'-phosphate synthase subunit PDX2 (219 aa).

An L-glutamine-binding site is contributed by 52 to 54; sequence GES. Cys-87 functions as the Nucleophile in the catalytic mechanism. L-glutamine contacts are provided by residues Arg-121 and 153–154; that span reads IR. Catalysis depends on charge relay system residues His-196 and Glu-198.

The protein belongs to the glutaminase PdxT/SNO family. In terms of assembly, in the presence of Pdx1, forms a dodecamer of heterodimers. Only shows activity in the heterodimer.

The protein resides in the cytoplasm. It carries out the reaction aldehydo-D-ribose 5-phosphate + D-glyceraldehyde 3-phosphate + L-glutamine = pyridoxal 5'-phosphate + L-glutamate + phosphate + 3 H2O + H(+). The catalysed reaction is L-glutamine + H2O = L-glutamate + NH4(+). Its pathway is cofactor biosynthesis; pyridoxal 5'-phosphate biosynthesis. In terms of biological role, catalyzes the hydrolysis of glutamine to glutamate and ammonia as part of the biosynthesis of pyridoxal 5'-phosphate. The resulting ammonia molecule is channeled to the active site of Pdx1. In Plasmodium falciparum (isolate 3D7), this protein is Pyridoxal 5'-phosphate synthase subunit PDX2.